Consider the following 354-residue polypeptide: Protein C42 (354 aa).

Residues 349–352 (KRKK) carry the Nuclear localization signal motif.

The protein belongs to the baculoviridae C42 protein family.

The protein resides in the host nucleus. The polypeptide is Protein C42 (Orgyia pseudotsugata (Douglas-fir tussock moth)).